A 197-amino-acid chain; its full sequence is Ribosome maturation factor RimP (197 aa).

Belongs to the RimP family.

Its subcellular location is the cytoplasm. Required for maturation of 30S ribosomal subunits. The protein is Ribosome maturation factor RimP of Acidovorax sp. (strain JS42).